We begin with the raw amino-acid sequence, 42 residues long: Photosystem I reaction center subunit IX (42 aa).

The chain crosses the membrane as a helical span at residues 7–27 (YLSTAPVLSALWFAILAGLLI).

Belongs to the PsaJ family.

The protein resides in the plastid. It is found in the chloroplast thylakoid membrane. May help in the organization of the PsaE and PsaF subunits. The protein is Photosystem I reaction center subunit IX of Chlorokybus atmophyticus (Soil alga).